The sequence spans 249 residues: Probable transcriptional regulatory protein IL1088 (249 aa).

It belongs to the TACO1 family.

The protein localises to the cytoplasm. The protein is Probable transcriptional regulatory protein IL1088 of Idiomarina loihiensis (strain ATCC BAA-735 / DSM 15497 / L2-TR).